The following is a 502-amino-acid chain: Cytochrome P450 71A8 (502 aa).

The chain crosses the membrane as a helical span at residues 16–36; sequence IISHTLAFQALVSLILLISIT. The interval 93–119 is disordered; sequence PVSSRRRPRGNHENSRSRLRRPRGSRS. Residue Cys-447 coordinates heme.

Belongs to the cytochrome P450 family. Requires heme as cofactor.

It is found in the membrane. The sequence is that of Cytochrome P450 71A8 (CYP71A8) from Mentha piperita (Peppermint).